Consider the following 71-residue polypeptide: UPF0337 protein PPA1427 (71 aa).

Positions 20-46 are disordered; sequence EKIGGLTDDSDLKSAGADQKASGKVAQ.

The protein belongs to the UPF0337 (CsbD) family.

This Cutibacterium acnes (strain DSM 16379 / KPA171202) (Propionibacterium acnes) protein is UPF0337 protein PPA1427.